Consider the following 637-residue polypeptide: MAETAAESGGGGDSGVGACERGVAPIKAQYRTTKERFHEYLDGDKQEGACQEVPTGDPAEPGAKRIRLEDGQENGKTEVAIESRERQVPKRARGQNKSRPHVKPAHYDKDRLCPSFLQEPATPCAFGDRCRFLHDVGRYLETKPADLGPRCVLFETFGRCPFSMTCRFAGAHLGPEGQNLVQEEVVARCAQLPSVRNGLDRALQQQLRKRQVCFERAEQALNRLTQSPMPTVVPETTVAMATPKQNSCHAQLDTVGGAGTPQSSPVPTCGPLTDEDVIRLRPCEKKRLDISGKLYLAPLTTCGNLPFRRICKRFGADVTCGEMAVCTNLLQGQMSEWALLKRHPCEDIFGVQLEGAFPDTMTKCAELLNRTIDVDFVDINVGCPIDLVYKKGGGCALMNRSAKFQQIVRGVNGVLDVPLTVKMRTGVQERVSLAHRLLPELRDWGVALVTLHGRSREQRYTRLADWPYIEQCAKVASPMPLFGNGDILSFEDANCAMQTGVAGIMVARGALLKPWLFTEIKEQRHWDISSSERLDILRDFTHYGLEHWGSDTQGVERTRRFLLEWLSFLCRYVPVGLLERPPQRINERPPYYLGRDYLETLMASQQAADWIRISEMLLGPVPPGFVFLPKHKANAYK.

Disordered stretches follow at residues 1–21 (MAETAAESGGGGDSGVGACER), 41–63 (LDGDKQEGACQEVPTGDPAEPGA), and 85–105 (ERQVPKRARGQNKSRPHVKPA). Residues 89 to 104 (PKRARGQNKSRPHVKP) are compositionally biased toward basic residues. 2 C3H1-type zinc fingers span residues 107-137 (YDKDRLCPSFLQEPATPCAFGDRCRFLHDVG) and 145-175 (ADLGPRCVLFETFGRCPFSMTCRFAGAHLGP). Thr260 bears the Phosphothreonine mark. Residues Ser263 and Ser264 each carry the phosphoserine modification. FMN is bound by residues 298–300 (PLT) and Gln352. Cys383 serves as the catalytic Proton donor. Residue Lys403 forms a Glycyl lysine isopeptide (Lys-Gly) (interchain with G-Cter in SUMO2) linkage. Residues Lys422, His452, 484-486 (NGD), and 507-508 (AR) each bind FMN.

The protein belongs to the Dus family. Dus3 subfamily. Requires FMN as cofactor.

The enzyme catalyses 5,6-dihydrouridine(47) in tRNA + NAD(+) = uridine(47) in tRNA + NADH + H(+). It carries out the reaction 5,6-dihydrouridine(47) in tRNA + NADP(+) = uridine(47) in tRNA + NADPH + H(+). It catalyses the reaction a 5,6-dihydrouridine in mRNA + NAD(+) = a uridine in mRNA + NADH + H(+). The catalysed reaction is a 5,6-dihydrouridine in mRNA + NADP(+) = a uridine in mRNA + NADPH + H(+). Functionally, catalyzes the synthesis of dihydrouridine, a modified base, in various RNAs, such as tRNAs, mRNAs and some long non-coding RNAs (lncRNAs). Mainly modifies the uridine in position 47 (U47) in the D-loop of most cytoplasmic tRNAs. Also able to mediate the formation of dihydrouridine in some mRNAs, thereby regulating their translation. This chain is tRNA-dihydrouridine(47) synthase [NAD(P)(+)]-like, found in Mus musculus (Mouse).